The primary structure comprises 1503 residues: MLAMKDKPWLLLFGLLAALSCLASFGDAAYPYYGTKIGALTRLHHGVSGDVYAVDSRTIFIKKFNYDGEAPAAYFYVGNTARPSNEGAARLRDERGGTASLTRRYRNKDVTLSLPEGKTLRDIKWFSVWCDEFAVNFGDVSIPPNLDFPRPQKISALRGVHGVSSDNIVIVDAQTLLVPNFSYDGEAPDAKFWVGRGQRPTSDGLRIPDENGKENPLRRYERKTIVLTLPEDLTIFDIGHFGVWCEAFTVDFGHVRLPEGLNVPPSLKMLGISPQSKLNCEVLYDDLAFEVRWAVAGESIVVQLVAKLEPNHYMSFGISPNKNISQMIGADAVVAWVDPQTGNGFATDYFLEGKAQCSGGRGACPDTKISEKTNSIRLLNAAMVNGYSIVTYQRSLAATDRLDLPISITGAESVVWAIGPLNDYQEVSFHTFYNKHLHQIEFGRQPKWNCPLPEGARGNSNSSEQEDSAPAAQSSTGGAGYPPAGRPNVEPDEEFYENRAEALHRQPPQRRQETAIITQRRPVPTPKPVNSNGAWDIPAIQCHEPEDGVFYAQMGPTGGKHGYPAITGHVGWGISWYINGLLIPEIHVVRGKTYTFVVEGGNNPDIPAKYHPFYISDDPVGGYEHKREEEKKAVRIYAGVHRSRSGQVTPTGVGRLCNWTPDVEGPPADDYQSFGAYQRTLTLKCDAGEPGVITWKPDRNTPDTVYYHCFTHRYLGWKIHVHDSCDSEAGGLKGAASERHEIRLPAKATVAEPAPVHEDYAGEASVRHETKVSANDNFLLKHQTDLIKNHNMNGTPPKLSFEITKSSEITKLISDGIRAAEALEESLLRNPNLNPNHPNQNPIPNPHQKPNVTPTEISSRPEILLGETHAHTLNASPSASAYPSPSATLPSANLKLPILAAGPHLIHHPPHLHRLHHQPQHAPHPHVHLHHHNLTANLPALAQKTIGLSEFLRPPQNAPLFHPVKLPGRRPFPAPIKKVPASRPILPQQHPHLHPHPQQHPVLLQQQPSLIVSHYRKPIPGLLKPFVKEKPFPLQPLAASVLLLGQPTELGGLNNKGERLKIKGKPKIPVPYVDLEPQGSLQNTAIFNQPGGKGKGDQKPKASSVSISTTPIPLVKRPTVKEPSQEEIASMRPAVNQGFKPDTVIVESGFKPIVRTDGTGVQLPKEIIDQVAHRREDPGTEIDEVMETDTLFLAAQQGGSETQSFEPMFIPSPLDSTNATKVLRVNVKEVSPTASALRLPSAALEHALPSASELIKPTLDELFAEDLNEEELEMEPMPVADDVESLEETTKKDAVTTTINIPRNTTKKPDPDLLEDLFGPDEEELYADELELDMDDRVAAAAERIDTYYLPPDNRKIPDTRVPSGALYTFDGKSVVDSSLVLPPKLDAPDNANVHQRHAQYGLTPLEQLVRTTPQFGVYRGELPQEFRGTEPQPVSEYSHPAPFSRTTPVFSSSSGSTIYPYSSSTGASTSTVSSSASSPLSSSSLRPISTKLQLLKPEGRRA.

Positions 1–28 are cleaved as a signal peptide; it reads MLAMKDKPWLLLFGLLAALSCLASFGDA. DM13 domains follow at residues 34 to 143 and 151 to 258; these read GTKI…VSIP and PQKI…VRLP. One can recognise a DOMON domain in the interval 287-419; it reads LAFEVRWAVA…GAESVVWAIG (133 aa). 4 disordered regions span residues 451–491, 830–857, 1086–1106, and 1426–1503; these read PLPE…NVEP, NPNLNPNHPNQNPIPNPHQKPNVTPTEI, IFNQPGGKGKGDQKPKASSVS, and EFRG…GRRA. Positions 830–840 are enriched in low complexity; that stretch reads NPNLNPNHPNQ. Residues 1452–1491 are compositionally biased toward low complexity; sequence SSSSGSTIYPYSSSTGASTSTVSSSASSPLSSSSLRPIST.

As to quaternary structure, interacts with Chro and Mgtor as part of a macromolecular complex forming the spindle matrix. Chro colocalizes with Skeletor (Skel) on the chromosomes at interphase and on spindle during metaphase.

The protein resides in the cytoplasm. The protein localises to the cytoskeleton. It localises to the spindle. Its subcellular location is the nucleus. It is found in the nucleolus. The protein resides in the chromosome. Provides structural support to stabilize and organize the microtubule spindle during mitosis (within embryonic somatic cells) and meiosis (within spermatocytes). The role in mitosis regulation depends on the Ran pathway. This chain is Protein Skeletor, isoforms D/E, found in Drosophila melanogaster (Fruit fly).